The primary structure comprises 386 residues: Methionine aminotransferase (386 aa).

Lysine 236 is modified (N6-(pyridoxal phosphate)lysine).

Belongs to the class-I pyridoxal-phosphate-dependent aminotransferase family. In terms of assembly, homodimer. It depends on pyridoxal 5'-phosphate as a cofactor.

It localises to the cytoplasm. It catalyses the reaction a 2-oxocarboxylate + L-methionine = 4-methylsulfanyl-2-oxobutanoate + an L-alpha-amino acid. In terms of biological role, shows aminotransferase activity with methionine and histidine as substrates, and to a lesser extent also with phenylalanine. This chain is Methionine aminotransferase (ybdL), found in Escherichia coli (strain K12).